Reading from the N-terminus, the 217-residue chain is Large ribosomal subunit protein uL1 (217 aa).

At S2 the chain carries N-acetylserine. Y11 carries the post-translational modification Phosphotyrosine. K91 and K106 each carry N6-acetyllysine. K118 bears the N6-acetyllysine; alternate mark. A Glycyl lysine isopeptide (Lys-Gly) (interchain with G-Cter in SUMO1); alternate cross-link involves residue K118. K118 participates in a covalent cross-link: Glycyl lysine isopeptide (Lys-Gly) (interchain with G-Cter in SUMO2); alternate.

Belongs to the universal ribosomal protein uL1 family. As to quaternary structure, component of the large ribosomal subunit.

Its subcellular location is the cytoplasm. In terms of biological role, component of the large ribosomal subunit. The ribosome is a large ribonucleoprotein complex responsible for the synthesis of proteins in the cell. This Macaca fascicularis (Crab-eating macaque) protein is Large ribosomal subunit protein uL1 (RPL10A).